We begin with the raw amino-acid sequence, 353 residues long: Magnesium-chelatase subunit ChlI (353 aa).

45–52 (GDRGTGKS) serves as a coordination point for ATP.

The protein belongs to the Mg-chelatase subunits D/I family.

The protein localises to the plastid. It is found in the chloroplast. The catalysed reaction is protoporphyrin IX + Mg(2+) + ATP + H2O = Mg-protoporphyrin IX + ADP + phosphate + 3 H(+). It functions in the pathway porphyrin-containing compound metabolism; chlorophyll biosynthesis. Its function is as follows. Involved in chlorophyll biosynthesis; introduces a magnesium ion into protoporphyrin IX to yield Mg-protoporphyrin IX. This Trieres chinensis (Marine centric diatom) protein is Magnesium-chelatase subunit ChlI (chlI).